The chain runs to 194 residues: Ribonuclease HII (194 aa).

One can recognise an RNase H type-2 domain in the interval 3 to 193 (ILTAGVDEAG…VRNLLAQQTL (191 aa)). Residues Asp9, Glu10, and Asp101 each contribute to the a divalent metal cation site.

This sequence belongs to the RNase HII family. It depends on Mn(2+) as a cofactor. Mg(2+) serves as cofactor.

The protein resides in the cytoplasm. The catalysed reaction is Endonucleolytic cleavage to 5'-phosphomonoester.. In terms of biological role, endonuclease that specifically degrades the RNA of RNA-DNA hybrids. In Neisseria meningitidis serogroup C (strain 053442), this protein is Ribonuclease HII.